The following is a 510-amino-acid chain: MVVFLFILYRQSDLKFKSMNGVIIVNTLKKRLFVATTMIWGLSVTLPVLAEYKPIEQPVEPANPSLKIESRNDLFKEKYPKQYQTWADTSKSTDLDSVNYEDPRVIVLWAGYAFAKDYKKPRGHFYAVTDVREILRTAAPMTPDAGPMPMACWSCKSPDVPRLIAERGEAGYFGATWASGGSEVVNPIGCADCHDTTSKDFAEGKPALRIARPYVLRALEKIDHKFDTSDRTDQRAALCANCHVEYYFAGDLKQVTFPWDNGITVDAMEKYYDDIGFVDWTHAVSKAPMLKAQHPDYETWMLGVHGKNGVTCIDCHMPKVQGADGKVYTDHQIGNPFNAFEHTCANCHDQSKEKLQAMVKSRKTEIKDVMLRLEDQLVAAHFEAKAAWEAGATKEEMKEALQDIRHAQWRWDYAAAGHGGHIHAPDVLLKVIGTGLDKSSDARTKLVRVLAKHGITDPVQLPDISTAENAWKATGVDIEKERKAKAEFLKTVVPQWDKEAREKGLLPAEK.

A signal peptide spans 1 to 50 (MVVFLFILYRQSDLKFKSMNGVIIVNTLKKRLFVATTMIWGLSVTLPVLA). His124 contacts heme c. Residues Cys152, Cys155, and Lys156 each contribute to the heme site. Residues Cys190, Cys193, His194, Cys239, Cys242, and His243 each contribute to the heme c site. Ca(2+) contacts are provided by Glu245, Tyr246, Lys291, and Gln293. A substrate-binding site is contributed by Tyr246. Residue His294 coordinates substrate. The heme c site is built by His305, Cys312, Cys315, His316, His331, Cys344, Cys347, His348, and His423.

It belongs to the cytochrome c-552 family. Ca(2+) serves as cofactor. Heme c is required as a cofactor.

Its subcellular location is the periplasm. The enzyme catalyses 6 Fe(III)-[cytochrome c] + NH4(+) + 2 H2O = 6 Fe(II)-[cytochrome c] + nitrite + 8 H(+). The protein operates within nitrogen metabolism; nitrate reduction (assimilation). Catalyzes the reduction of nitrite to ammonia, consuming six electrons in the process. This is Cytochrome c-552 from Pasteurella multocida (strain Pm70).